We begin with the raw amino-acid sequence, 378 residues long: MNQADRALQASQARVYNFSAGPAVLPLEVLEQAKEEMVSWHGSGMSVMEMSHRGREFENILAAAFSDLRQLLAVPDNYEILFLQGGAIAENAIVPLNLMRRLSADAPKADYVVTGTWSVKSQQEARKYGEVNIAATSETERFHKIPDVSSWKLSSDAAYVHLCTNETIVGVEYQETPDVGQAHGRVVVSDVSSHILSRPIDWNGYQVLYGGAQKNIGPAGLTIAIVRKDLLGHAHPLCPSAFNWRLVAENGSMYNTPPTYAIYIAGLVFQWIKRQGGVEALETRNIIKSKMLYDFIDASSFYRNEIHPTCRSRMNVPFFLNDESRSEAFLAQARERGLVQLKGHKSVGGMRASIYNAMPLEGVEALVDFMREFERVSA.

Arg-53 contributes to the L-glutamate binding site. Residues Trp-117, Thr-167, Asp-190, and Gln-213 each contribute to the pyridoxal 5'-phosphate site. N6-(pyridoxal phosphate)lysine is present on Lys-214. 255–256 (NT) lines the pyridoxal 5'-phosphate pocket.

It belongs to the class-V pyridoxal-phosphate-dependent aminotransferase family. SerC subfamily. As to quaternary structure, homodimer. The cofactor is pyridoxal 5'-phosphate.

It is found in the cytoplasm. The enzyme catalyses O-phospho-L-serine + 2-oxoglutarate = 3-phosphooxypyruvate + L-glutamate. It carries out the reaction 4-(phosphooxy)-L-threonine + 2-oxoglutarate = (R)-3-hydroxy-2-oxo-4-phosphooxybutanoate + L-glutamate. It participates in amino-acid biosynthesis; L-serine biosynthesis; L-serine from 3-phospho-D-glycerate: step 2/3. It functions in the pathway cofactor biosynthesis; pyridoxine 5'-phosphate biosynthesis; pyridoxine 5'-phosphate from D-erythrose 4-phosphate: step 3/5. In terms of biological role, catalyzes the reversible conversion of 3-phosphohydroxypyruvate to phosphoserine and of 3-hydroxy-2-oxo-4-phosphonooxybutanoate to phosphohydroxythreonine. The chain is Phosphoserine aminotransferase from Ralstonia pickettii (strain 12J).